A 223-amino-acid polypeptide reads, in one-letter code: Protein NrfC (223 aa).

Residues 1–27 (MTWSRRQFLTGVGVLAAVSGTAGRVVA) constitute a signal peptide (tat-type signal). 4Fe-4S ferredoxin-type domains follow at residues 37–65 (YGMV…VPEG), 83–114 (VKYR…RDAA), and 116–145 (GIVD…IHPV). Cys46, Cys49, Cys52, Cys56, Cys92, Cys95, Cys100, Cys104, Cys125, Cys128, Cys131, Cys135, Cys152, Cys155, Cys168, and Cys172 together coordinate [4Fe-4S] cluster.

Post-translationally, predicted to be exported by the Tat system. The position of the signal peptide cleavage has not been experimentally proven.

Functionally, probably involved in the transfer of electrons from the quinone pool to the type-c cytochromes. This is Protein NrfC (nrfC) from Escherichia coli O157:H7.